A 701-amino-acid chain; its full sequence is Acetyl-coenzyme A synthetase, cytoplasmic (701 aa).

The span at 1-26 (MGLPEERRKSGSGSRAREETGAEGRV) shows a compositional bias: basic and acidic residues. The disordered stretch occupies residues 1–37 (MGLPEERRKSGSGSRAREETGAEGRVRGWSPPPEVRR). The segment at 1-107 (MGLPEERRKS…GATTNICYNV (107 aa)) is interaction with TFEB. Ser-30 carries the post-translational modification Phosphoserine. 219 to 222 (RGEK) contacts CoA. Residues Ser-263, Ser-265, and Ser-267 each carry the phosphoserine modification. A CoA-binding site is contributed by Thr-363. Lys-418 carries the N6-acetyllysine modification. Residues 439–441 (GEP), 463–468 (DTFWQT), Asp-552, and Arg-567 each bind ATP. Positions 575 and 636 each coordinate CoA. The short motif at 656–668 (KTRSGKIMRRVLR) is the Nuclear localization signal element. Ser-659 is modified (phosphoserine; by AMPK). Lys-661 bears the N6-acetyllysine mark.

Belongs to the ATP-dependent AMP-binding enzyme family. In terms of assembly, monomer. Interacts with TFEB. AMPK-mediated phosphorylated form at Ser-659 interacts with KPNA1; this interaction results in nuclear translocation of ACSS2. Interacts with the 'Thr-172' phosphorylated form of PRKAA2. Interacts with CREBBP. Post-translationally, reversibly acetylated at Lys-661. The acetyl-CoA synthase activity is inhibited by acetylation and activated by deacetylation mediated by the deacetylases SIRT1 and SIRT3. In terms of tissue distribution, expressed in the hippocampus.

It localises to the cytoplasm. Its subcellular location is the cytosol. It is found in the nucleus. The catalysed reaction is acetate + ATP + CoA = acetyl-CoA + AMP + diphosphate. It carries out the reaction propanoate + ATP + CoA = propanoyl-CoA + AMP + diphosphate. Inhibited by acetylation at Lys-661 and activated by deacetylation mediated by the deacetylases SIRT1 and SIRT3. In terms of biological role, catalyzes the synthesis of acetyl-CoA from short-chain fatty acids. Acetate is the preferred substrate but can also utilize propionate with a much lower affinity. Nuclear ACSS2 promotes glucose deprivation-induced lysosomal biogenesis and autophagy, tumor cell survival and brain tumorigenesis. Glucose deprivation results in AMPK-mediated phosphorylation of ACSS2 leading to its translocation to the nucleus where it binds to TFEB and locally produces acetyl-CoA for histone acetylation in the promoter regions of TFEB target genes thereby activating their transcription. The regulation of genes associated with autophagy and lysosomal activity through ACSS2 is important for brain tumorigenesis and tumor survival. Acts as a chromatin-bound transcriptional coactivator that up-regulates histone acetylation and expression of neuronal genes. Can be recruited to the loci of memory-related neuronal genes to maintain a local acetyl-CoA pool, providing the substrate for histone acetylation and promoting the expression of specific genes, which is essential for maintaining long-term spatial memory. The chain is Acetyl-coenzyme A synthetase, cytoplasmic (Acss2) from Mus musculus (Mouse).